Reading from the N-terminus, the 422-residue chain is Putative acid phosphatase 5 (422 aa).

Residues 1 to 13 (MLLLLVLLIGASG) form the signal peptide. His-40 (nucleophile) is an active-site residue. 3 N-linked (GlcNAc...) asparagine glycosylation sites follow: Asn-104, Asn-210, and Asn-218. Disulfide bonds link Cys-152/Cys-363, Cys-205/Cys-302, and Cys-338/Cys-342. Asp-279 serves as the catalytic Proton donor. Asn-312 and Asn-323 each carry an N-linked (GlcNAc...) asparagine glycan.

It belongs to the histidine acid phosphatase family.

The enzyme catalyses a phosphate monoester + H2O = an alcohol + phosphate. This chain is Putative acid phosphatase 5 (pho-5), found in Caenorhabditis elegans.